The primary structure comprises 505 residues: Putative pentatricopeptide repeat-containing protein At1g26500 (505 aa).

7 PPR repeats span residues 145–179 (NDKT…GYLY), 180–210 (NVET…LKEF), 214–248 (DEIT…GFDV), 249–279 (DIEA…MVSK), 285–319 (DGGF…GVYV), 320–350 (DNLT…VENP), and 351–385 (DISI…GCEP).

It belongs to the PPR family. P subfamily.

The polypeptide is Putative pentatricopeptide repeat-containing protein At1g26500 (Arabidopsis thaliana (Mouse-ear cress)).